Reading from the N-terminus, the 96-residue chain is ESAT-6-like protein SAG1039 (96 aa).

This sequence belongs to the WXG100 family. sagEsxA-like subfamily. In terms of assembly, homodimer.

The polypeptide is ESAT-6-like protein SAG1039 (Streptococcus agalactiae serotype V (strain ATCC BAA-611 / 2603 V/R)).